The chain runs to 153 residues: Large ribosomal subunit protein uL30 (153 aa).

This sequence belongs to the universal ribosomal protein uL30 family. As to quaternary structure, part of the 50S ribosomal subunit.

This is Large ribosomal subunit protein uL30 from Methanocorpusculum labreanum (strain ATCC 43576 / DSM 4855 / Z).